We begin with the raw amino-acid sequence, 564 residues long: Forkhead transcription factor HCM1 (564 aa).

Positions 33–80 are disordered; sequence DEKEMITPPSSTVRKTMKEVNKRPSHPLSPDHSSPIAPSKAKRQRSDT. Over residues 58–67 the composition is skewed to low complexity; it reads HPLSPDHSSP. The segment at residues 108–199 is a DNA-binding region (fork-head); it reads KKPPYSYATL…KFFKGENRGY (92 aa). The segment covering 224-241 has biased composition (acidic residues); that stretch reads QVESGEGNDDLPDEEERE. Positions 224-246 are disordered; sequence QVESGEGNDDLPDEEEREEAGKF. Residue threonine 342 is modified to Phosphothreonine. A disordered region spans residues 401–448; the sequence is SKPQSQQSYSNSQLPPPPSSHGSDLLKTPKMRHSDGLEKTPSRLISTP. Over residues 402–413 the composition is skewed to polar residues; the sequence is KPQSQQSYSNSQ. Basic and acidic residues predominate over residues 432–441; the sequence is RHSDGLEKTP. Serine 496 carries the post-translational modification Phosphoserine. The disordered stretch occupies residues 536-564; that stretch reads SDGNNTTDSNQKHHPYHNHPSNDSGNEKN. Polar residues predominate over residues 554 to 564; it reads HPSNDSGNEKN.

Phosphorylated by CDK1.

It localises to the cytoplasm. The protein localises to the nucleus. Its function is as follows. Transcription factor regulating the cell cycle specific transcription of a spindle pole body (SPB) calmodulin binding protein SPC110. Required for full induction of SPC110 transcription in late G1. Binds to DNA consensus sequence 5'-[AT]AA[TC]AAACAA[AT]-3'. Dosage dependent suppressor of calmodulin mutants which have specific defects in SPB assembly. The polypeptide is Forkhead transcription factor HCM1 (HCM1) (Saccharomyces cerevisiae (strain ATCC 204508 / S288c) (Baker's yeast)).